A 357-amino-acid polypeptide reads, in one-letter code: MSTNPIQPLLDVLYQGKSLSREQTAELFSALIRGEMSEAAMAGMLVALKMRGETIDEISGAADAMRAAAKPFPCPERNNNPLHNGIVDIVGTGGDGFNTINISTTAAFVAAAAGAKVAKHGNRSVSSKSGSSDLLAQFGIDLTMSPETASRCLDALNLCFLFAPHYHGGVKHAVPVRQALKTRTLFNVLGPLINPARPEFMLLGVYSPELVLPIAKVLKALGTKRAMVVHGSGLDEVALHGNTQVAELKDGDIIEYQLTPADLGVPLAQISDLEGGEPAQNALITEAILKGNGTEAHANAVAINAGCALYVCGITDSVKAGTLLALATIQSGKAFELLSQLAKVSGEAHVNGQERGR.

Residues Gly91, 94 to 95 (GD), Thr99, 101 to 104 (NIST), 119 to 127 (KHGNRSVSS), and Ser131 each bind 5-phospho-alpha-D-ribose 1-diphosphate. Anthranilate is bound at residue Gly91. Ser103 serves as a coordination point for Mg(2+). Asn122 serves as a coordination point for anthranilate. Arg177 provides a ligand contact to anthranilate. Mg(2+) contacts are provided by Asp235 and Glu236.

This sequence belongs to the anthranilate phosphoribosyltransferase family. Homodimer. Mg(2+) is required as a cofactor.

The catalysed reaction is N-(5-phospho-beta-D-ribosyl)anthranilate + diphosphate = 5-phospho-alpha-D-ribose 1-diphosphate + anthranilate. It functions in the pathway amino-acid biosynthesis; L-tryptophan biosynthesis; L-tryptophan from chorismate: step 2/5. Its function is as follows. Catalyzes the transfer of the phosphoribosyl group of 5-phosphorylribose-1-pyrophosphate (PRPP) to anthranilate to yield N-(5'-phosphoribosyl)-anthranilate (PRA). This Shewanella baltica (strain OS195) protein is Anthranilate phosphoribosyltransferase.